Consider the following 197-residue polypeptide: Orotate phosphoribosyltransferase (197 aa).

5-phospho-alpha-D-ribose 1-diphosphate is bound by residues Arg87, Lys91, His93, and 112–120 (DDVATTGGS). Orotate is bound by residues Thr116 and Arg144.

Belongs to the purine/pyrimidine phosphoribosyltransferase family. PyrE subfamily. Homodimer. It depends on Mg(2+) as a cofactor.

It catalyses the reaction orotidine 5'-phosphate + diphosphate = orotate + 5-phospho-alpha-D-ribose 1-diphosphate. It functions in the pathway pyrimidine metabolism; UMP biosynthesis via de novo pathway; UMP from orotate: step 1/2. Functionally, catalyzes the transfer of a ribosyl phosphate group from 5-phosphoribose 1-diphosphate to orotate, leading to the formation of orotidine monophosphate (OMP). The sequence is that of Orotate phosphoribosyltransferase from Sulfolobus acidocaldarius (strain ATCC 33909 / DSM 639 / JCM 8929 / NBRC 15157 / NCIMB 11770).